A 225-amino-acid polypeptide reads, in one-letter code: UPF0173 metal-dependent hydrolase Pars_0810 (225 aa).

It belongs to the UPF0173 family.

This Pyrobaculum arsenaticum (strain DSM 13514 / JCM 11321 / PZ6) protein is UPF0173 metal-dependent hydrolase Pars_0810.